Here is a 467-residue protein sequence, read N- to C-terminus: Glutamate--tRNA ligase (467 aa).

The 'HIGH' region motif lies at 9–19; that stretch reads PSPTGYLHIGG. Residues 237–241 carry the 'KMSKS' region motif; it reads KLSKR. Residue K240 participates in ATP binding.

The protein belongs to the class-I aminoacyl-tRNA synthetase family. Glutamate--tRNA ligase type 1 subfamily. Monomer.

Its subcellular location is the cytoplasm. It catalyses the reaction tRNA(Glu) + L-glutamate + ATP = L-glutamyl-tRNA(Glu) + AMP + diphosphate. Functionally, catalyzes the attachment of glutamate to tRNA(Glu) in a two-step reaction: glutamate is first activated by ATP to form Glu-AMP and then transferred to the acceptor end of tRNA(Glu). This is Glutamate--tRNA ligase from Xanthomonas oryzae pv. oryzae (strain MAFF 311018).